We begin with the raw amino-acid sequence, 76 residues long: Envelope small membrane protein (76 aa).

The Virion surface segment spans residues 1–16; sequence MYSFVSEETGTLIVNS. A helical membrane pass occupies residues 17–37; it reads VLLFFAFVVFLLVTLAILTAL. Over 38 to 76 the chain is Intravirion; the sequence is RLCAYCCNIVNVSLVKPTVYVYSRVKNLNSSEGVPDLLV.

The protein belongs to the betacoronaviruses E protein family. In terms of assembly, homopentamer. Interacts with membrane protein M in the budding compartment of the host cell, which is located between endoplasmic reticulum and the Golgi complex. Interacts with Nucleoprotein.

It localises to the host Golgi apparatus membrane. In terms of biological role, plays a central role in virus morphogenesis and assembly. Acts as a viroporin and self-assembles in host membranes forming pentameric protein-lipid pores that allow ion transport. Also plays a role in the induction of apoptosis. The chain is Envelope small membrane protein from Rhinolophus macrotis (Big-eared horseshoe bat).